A 168-amino-acid polypeptide reads, in one-letter code: UPF0478 protein SH1183 (168 aa).

The helical transmembrane segment at 7–27 (IAGIIAAIAFLVLCIGIVVVL) threads the bilayer. A disordered region spans residues 144 to 168 (YRNTSVGNDANHSNENYTTNVEKNF).

This sequence belongs to the UPF0478 family.

It localises to the cell membrane. This is UPF0478 protein SH1183 from Staphylococcus haemolyticus (strain JCSC1435).